We begin with the raw amino-acid sequence, 593 residues long: MEDYKQRIKNKLNVVPMEPGCYLMKDRNDQVIYVGKAKKLRNRLRSYFTGAHDAKTTRLVGEIRRFEFIVTSSETESLLLELNLIKQYQPRYNILLKDDKSYPFIKITKEKYPRLLVTRTVKQGTGKYFGPYPNAYSAQETKKLLDRIYPYRKCDKMPDKLCLYYHIGQCLGPCVYDVDLSKYAQMTKEITDFLNGEDKTILKSLEERMLTASESLDFERAKEYRDLIQHIQNLTNKQKIMSSDKTIRDVFGYCVDKGWMCIQVFFIRQGNMIKRDTTMIPLQQTEEEEFYTFIGQFYSLNQHILPKEVHVPRNLDKEMIQSVVDTKIVQPARGPKKDMVDLAAHNAKVSLNNKFELISRDESRTIKAIEELGTQMGIQTPIRIEAFDNSNIQGVDPVSAMVTFVDGKPDKKNYRKYKIKTVKGPDDYKSMREVVRRRYSRVLNEGLPLPDLIIVDGGKGHMNGVIDVLQNELGLDIPVAGLQKNDKHQTSELLYGASAEIVPLKKNSQAFYLLHRIQDEVHRFAITFHRQTRQKTGLKSILDDIDGIGNKRKTLLLRSFGSIKKMKEATLEDFKNIGIPENVAKNLHEQLHK.

The GIY-YIG domain maps to 17-94 (MEPGCYLMKD…IKQYQPRYNI (78 aa)). One can recognise a UVR domain in the interval 199–234 (KTILKSLEERMLTASESLDFERAKEYRDLIQHIQNL).

Belongs to the UvrC family. As to quaternary structure, interacts with UvrB in an incision complex.

Its subcellular location is the cytoplasm. In terms of biological role, the UvrABC repair system catalyzes the recognition and processing of DNA lesions. UvrC both incises the 5' and 3' sides of the lesion. The N-terminal half is responsible for the 3' incision and the C-terminal half is responsible for the 5' incision. The protein is UvrABC system protein C of Staphylococcus aureus (strain Mu3 / ATCC 700698).